We begin with the raw amino-acid sequence, 279 residues long: Tryptophan synthase alpha chain (279 aa).

Active-site proton acceptor residues include Glu-50 and Asp-61.

The protein belongs to the TrpA family. In terms of assembly, tetramer of two alpha and two beta chains.

The catalysed reaction is (1S,2R)-1-C-(indol-3-yl)glycerol 3-phosphate + L-serine = D-glyceraldehyde 3-phosphate + L-tryptophan + H2O. Its pathway is amino-acid biosynthesis; L-tryptophan biosynthesis; L-tryptophan from chorismate: step 5/5. In terms of biological role, the alpha subunit is responsible for the aldol cleavage of indoleglycerol phosphate to indole and glyceraldehyde 3-phosphate. This Sinorhizobium medicae (strain WSM419) (Ensifer medicae) protein is Tryptophan synthase alpha chain.